The chain runs to 190 residues: Small ribosomal subunit protein mS23 (190 aa).

Position 2 is an N-acetylalanine (A2). Residue K102 is modified to N6-acetyllysine. Residues 139–190 (RTQHGGSHVSRKSEHLSVRPQTALEENETQKEVPQDQHLEAPADQSKGLLPP) form a disordered region. Residues 166–179 (ETQKEVPQDQHLEA) are compositionally biased toward basic and acidic residues.

The protein belongs to the mitochondrion-specific ribosomal protein mS23 family. In terms of assembly, component of the mitochondrial small ribosomal subunit (mt-SSU). Mature mammalian 55S mitochondrial ribosomes consist of a small (28S) and a large (39S) subunit. The 28S small subunit contains a 12S ribosomal RNA (12S mt-rRNA) and 30 different proteins. The 39S large subunit contains a 16S rRNA (16S mt-rRNA), a copy of mitochondrial valine transfer RNA (mt-tRNA(Val)), which plays an integral structural role, and 52 different proteins.

It is found in the mitochondrion. The protein is Small ribosomal subunit protein mS23 (MRPS23) of Homo sapiens (Human).